We begin with the raw amino-acid sequence, 100 residues long: Urease subunit gamma (100 aa).

It belongs to the urease gamma subunit family. As to quaternary structure, heterotrimer of UreA (gamma), UreB (beta) and UreC (alpha) subunits. Three heterotrimers associate to form the active enzyme.

The protein localises to the cytoplasm. The catalysed reaction is urea + 2 H2O + H(+) = hydrogencarbonate + 2 NH4(+). Its pathway is nitrogen metabolism; urea degradation; CO(2) and NH(3) from urea (urease route): step 1/1. This Lysinibacillus sphaericus (strain C3-41) protein is Urease subunit gamma.